Consider the following 706-residue polypeptide: Glycine--tRNA ligase beta subunit (706 aa).

It belongs to the class-II aminoacyl-tRNA synthetase family. As to quaternary structure, tetramer of two alpha and two beta subunits.

It localises to the cytoplasm. The enzyme catalyses tRNA(Gly) + glycine + ATP = glycyl-tRNA(Gly) + AMP + diphosphate. The protein is Glycine--tRNA ligase beta subunit of Acidobacterium capsulatum (strain ATCC 51196 / DSM 11244 / BCRC 80197 / JCM 7670 / NBRC 15755 / NCIMB 13165 / 161).